The chain runs to 373 residues: Eukaryotic translation initiation factor 3 subunit M (373 aa).

An N-acetylserine modification is found at S2. Phosphoserine is present on residues S2 and S152. The 159-residue stretch at 180–338 (AASKVMVELL…RKVVVSHSTH (159 aa)) folds into the PCI domain. K253 bears the N6-acetyllysine mark. S366 carries the phosphoserine modification.

It belongs to the eIF-3 subunit M family. In terms of assembly, component of the eukaryotic translation initiation factor 3 (eIF-3) complex, which is composed of 13 subunits: EIF3A, EIF3B, EIF3C, EIF3D, EIF3E, EIF3F, EIF3G, EIF3H, EIF3I, EIF3J, EIF3K, EIF3L and EIF3M. The eIF-3 complex appears to include 3 stable modules: module A is composed of EIF3A, EIF3B, EIF3G and EIF3I; module B is composed of EIF3F, EIF3H, and EIF3M; and module C is composed of EIF3C, EIF3D, EIF3E, EIF3K and EIF3L. EIF3C of module C binds EIF3B of module A and EIF3H of module B, thereby linking the three modules. EIF3J is a labile subunit that binds to the eIF-3 complex via EIF3B. The eIF-3 complex interacts with RPS6KB1 under conditions of nutrient depletion. Mitogenic stimulation leads to binding and activation of a complex composed of MTOR and RPTOR, leading to phosphorylation and release of RPS6KB1 and binding of EIF4B to eIF-3.

Its subcellular location is the cytoplasm. Its function is as follows. Component of the eukaryotic translation initiation factor 3 (eIF-3) complex, which is required for several steps in the initiation of protein synthesis. The eIF-3 complex associates with the 40S ribosome and facilitates the recruitment of eIF-1, eIF-1A, eIF-2:GTP:methionyl-tRNAi and eIF-5 to form the 43S pre-initiation complex (43S PIC). The eIF-3 complex stimulates mRNA recruitment to the 43S PIC and scanning of the mRNA for AUG recognition. The eIF-3 complex is also required for disassembly and recycling of post-termination ribosomal complexes and subsequently prevents premature joining of the 40S and 60S ribosomal subunits prior to initiation. The eIF-3 complex specifically targets and initiates translation of a subset of mRNAs involved in cell proliferation, including cell cycling, differentiation and apoptosis, and uses different modes of RNA stem-loop binding to exert either translational activation or repression. The polypeptide is Eukaryotic translation initiation factor 3 subunit M (Bos taurus (Bovine)).